Reading from the N-terminus, the 813-residue chain is Nuclear pore complex protein 5 (813 aa).

This sequence belongs to the nucleoporin Nup84/Nup107 family. As to quaternary structure, part of the nuclear pore complex (NPC). May interact with mdf-1.

It localises to the nucleus. The protein resides in the nuclear pore complex. It is found in the chromosome. The protein localises to the centromere. Its subcellular location is the kinetochore. It localises to the nucleus membrane. In terms of biological role, involved in kinetochore assembly and chromosome segregation during embryonic mitosis. Required for the localization of the NDC80 complex member him-10, the chromosomal passenger complex component air-2 and nuclear pore complex proteins npp-23 and npp-15 to kinetochores during metaphase. Required for npp-23 localization to the nuclear envelope during interphase. Recruits mdf-1, a component of the spindle assembly checkpoint, to the nuclear envelope. Appears dispensable for the assembly of the nuclear pore complex and for nuclear protein import. This is Nuclear pore complex protein 5 from Caenorhabditis elegans.